The sequence spans 352 residues: Holliday junction branch migration complex subunit RuvB (352 aa).

The disordered stretch occupies residues 1-42; the sequence is MAIVSSSAGRADSQPPAAKSRVVDASPLPEEASPAREDGLRP. The tract at residues 13-201 is large ATPase domain (RuvB-L); the sequence is SQPPAAKSRV…FGLIQRLEFY (189 aa). Positions 33–42 are enriched in basic and acidic residues; sequence SPAREDGLRP. Positions 40, 41, 82, 85, 86, 87, 191, 201, and 238 each coordinate ATP. Position 86 (T86) interacts with Mg(2+). Residues 202–273 form a small ATPAse domain (RuvB-S) region; that stretch reads GLEDLQAIVE…LVDEALTLHR (72 aa). Residues 276 to 352 are head domain (RuvB-H); the sequence is ARGLDASDRR…RRHLGWPELP (77 aa). DNA is bound by residues R331 and R336.

This sequence belongs to the RuvB family. As to quaternary structure, homohexamer. Forms an RuvA(8)-RuvB(12)-Holliday junction (HJ) complex. HJ DNA is sandwiched between 2 RuvA tetramers; dsDNA enters through RuvA and exits via RuvB. An RuvB hexamer assembles on each DNA strand where it exits the tetramer. Each RuvB hexamer is contacted by two RuvA subunits (via domain III) on 2 adjacent RuvB subunits; this complex drives branch migration. In the full resolvosome a probable DNA-RuvA(4)-RuvB(12)-RuvC(2) complex forms which resolves the HJ.

It localises to the cytoplasm. The catalysed reaction is ATP + H2O = ADP + phosphate + H(+). Its function is as follows. The RuvA-RuvB-RuvC complex processes Holliday junction (HJ) DNA during genetic recombination and DNA repair, while the RuvA-RuvB complex plays an important role in the rescue of blocked DNA replication forks via replication fork reversal (RFR). RuvA specifically binds to HJ cruciform DNA, conferring on it an open structure. The RuvB hexamer acts as an ATP-dependent pump, pulling dsDNA into and through the RuvAB complex. RuvB forms 2 homohexamers on either side of HJ DNA bound by 1 or 2 RuvA tetramers; 4 subunits per hexamer contact DNA at a time. Coordinated motions by a converter formed by DNA-disengaged RuvB subunits stimulates ATP hydrolysis and nucleotide exchange. Immobilization of the converter enables RuvB to convert the ATP-contained energy into a lever motion, pulling 2 nucleotides of DNA out of the RuvA tetramer per ATP hydrolyzed, thus driving DNA branch migration. The RuvB motors rotate together with the DNA substrate, which together with the progressing nucleotide cycle form the mechanistic basis for DNA recombination by continuous HJ branch migration. Branch migration allows RuvC to scan DNA until it finds its consensus sequence, where it cleaves and resolves cruciform DNA. The sequence is that of Holliday junction branch migration complex subunit RuvB from Prochlorococcus marinus (strain MIT 9313).